A 230-amino-acid chain; its full sequence is Porin OmpL (230 aa).

The N-terminal stretch at 1-20 (MKNINAIILLSSLTSASVFA) is a signal peptide.

The protein belongs to the oligogalacturonate-specific porin KdgM (TC 1.B.35) family. OmpL subfamily.

The protein localises to the cell outer membrane. Functionally, outer membrane channel protein that allows an efficient diffusion of low-molecular-weight solutes such as small sugars and tetraglycine. However, the specific substrate recognized by the OmpL channel is unknown. The chain is Porin OmpL (ompL) from Escherichia coli O157:H7.